We begin with the raw amino-acid sequence, 675 residues long: UvrABC system protein B (675 aa).

Positions 30 to 417 (SGIEQGNRNQ…SDQIVEQVVR (388 aa)) constitute a Helicase ATP-binding domain. Residue 43–50 (GVTGSGKT) coordinates ATP. The Beta-hairpin motif lies at 96-119 (YYDYYQPEAYVPSSDTFIEKDAAI). In terms of domain architecture, Helicase C-terminal spans 434–601 (QVDDVLSEIN…AVRQKVKEID (168 aa)). A UVR domain is found at 637 to 672 (AKHMSKLEKEMLKASKELQFEQAARLRDEILRLKAQ).

Belongs to the UvrB family. Forms a heterotetramer with UvrA during the search for lesions. Interacts with UvrC in an incision complex.

The protein resides in the cytoplasm. In terms of biological role, the UvrABC repair system catalyzes the recognition and processing of DNA lesions. A damage recognition complex composed of 2 UvrA and 2 UvrB subunits scans DNA for abnormalities. Upon binding of the UvrA(2)B(2) complex to a putative damaged site, the DNA wraps around one UvrB monomer. DNA wrap is dependent on ATP binding by UvrB and probably causes local melting of the DNA helix, facilitating insertion of UvrB beta-hairpin between the DNA strands. Then UvrB probes one DNA strand for the presence of a lesion. If a lesion is found the UvrA subunits dissociate and the UvrB-DNA preincision complex is formed. This complex is subsequently bound by UvrC and the second UvrB is released. If no lesion is found, the DNA wraps around the other UvrB subunit that will check the other stand for damage. This is UvrABC system protein B from Acinetobacter baylyi (strain ATCC 33305 / BD413 / ADP1).